Here is a 158-residue protein sequence, read N- to C-terminus: Small ribosomal subunit protein bS16 (158 aa).

The span at 111-121 shows a compositional bias: low complexity; that stretch reads AAAGLAEAPTK. The segment at 111-158 is disordered; that stretch reads AAAGLAEAPTKPAKKAPKAEAAPKTEAAPKADAPKTEEQAGAGSGEQG. The span at 127-148 shows a compositional bias: basic and acidic residues; sequence PKAEAAPKTEAAPKADAPKTEE.

This sequence belongs to the bacterial ribosomal protein bS16 family.

The sequence is that of Small ribosomal subunit protein bS16 from Salinispora arenicola (strain CNS-205).